Reading from the N-terminus, the 505-residue chain is MAVAVVTSRRMINIGNSIRRCFILNHRFFSTELTPTTITPINQDHLLRVCTILYQQQNSPDSRLVSKLSSTKFQLTHEFFLQVCNNFPLSWRPVHRFFLYSQTHHPDFTHTSTTSNKMLAIIGNSRNMDLFWELAQEIGKRGLVNDKTFRIVLKTLASARELKKCVNYFHLMNGFGYLYNVETMNRGVETLCKEKLVEEAKFVFIKLKEFIKPDEITYRTMIQGFCDVGDLIEAAKLWNLMMDEGFDVDIEAGKKIMETLLKKNQFDEASKVFYVMVSKRGGDLDGGFYRVMIDWLCKNGRIDMARKVFDEMRERGVYVDNLTWASLIYGLLVKRRVVEAYGLVEGVENPDISIYHGLIKGLVKIKRASEATEVFRKMIQRGCEPIMHTYLMLLQGHLGRRGRKGPDPLVNFDTIFVGGMIKAGKRLETTKYIERTLKRGLEVPRFDYSKFLHYYSNEEGVVMFEEMAKKLREVSLFDLADIFQRYGEKMTTRERRRDRDQLLKT.

PPR repeat units lie at residues 145–179 (NDKT…GYLY), 180–210 (NVET…LKEF), 214–248 (DEIT…GFDV), 249–279 (DIEA…MVSK), 285–319 (DGGF…GVYV), 320–350 (DNLT…VENP), and 351–385 (DISI…GCEP).

This sequence belongs to the PPR family. P subfamily.

This chain is Putative pentatricopeptide repeat-containing protein At1g26500, found in Arabidopsis thaliana (Mouse-ear cress).